Consider the following 438-residue polypeptide: Trigger factor (438 aa).

The PPIase FKBP-type domain maps to 160-245 (DDKVTIDFVG…VKKIQQAELP (86 aa)).

The protein belongs to the FKBP-type PPIase family. Tig subfamily.

Its subcellular location is the cytoplasm. The enzyme catalyses [protein]-peptidylproline (omega=180) = [protein]-peptidylproline (omega=0). Involved in protein export. Acts as a chaperone by maintaining the newly synthesized protein in an open conformation. Functions as a peptidyl-prolyl cis-trans isomerase. The protein is Trigger factor of Francisella tularensis subsp. novicida (strain U112).